The sequence spans 255 residues: 5-oxoprolinase subunit A (255 aa).

Belongs to the LamB/PxpA family. In terms of assembly, forms a complex composed of PxpA, PxpB and PxpC.

The enzyme catalyses 5-oxo-L-proline + ATP + 2 H2O = L-glutamate + ADP + phosphate + H(+). In terms of biological role, catalyzes the cleavage of 5-oxoproline to form L-glutamate coupled to the hydrolysis of ATP to ADP and inorganic phosphate. The polypeptide is 5-oxoprolinase subunit A (Pyrococcus abyssi (strain GE5 / Orsay)).